Here is a 307-residue protein sequence, read N- to C-terminus: Ribonuclease Z (307 aa).

The Zn(2+) site is built by His63, His65, Asp67, His68, His143, Asp213, and His271. The active-site Proton acceptor is the Asp67.

The protein belongs to the RNase Z family. Homodimer. The cofactor is Zn(2+).

The catalysed reaction is Endonucleolytic cleavage of RNA, removing extra 3' nucleotides from tRNA precursor, generating 3' termini of tRNAs. A 3'-hydroxy group is left at the tRNA terminus and a 5'-phosphoryl group is left at the trailer molecule.. Functionally, zinc phosphodiesterase, which displays some tRNA 3'-processing endonuclease activity. Probably involved in tRNA maturation, by removing a 3'-trailer from precursor tRNA. The protein is Ribonuclease Z of Lactococcus lactis subsp. cremoris (strain MG1363).